Reading from the N-terminus, the 874-residue chain is Alanine--tRNA ligase (874 aa).

Residues histidine 562, histidine 566, cysteine 665, and histidine 669 each contribute to the Zn(2+) site.

It belongs to the class-II aminoacyl-tRNA synthetase family. Zn(2+) serves as cofactor.

The protein localises to the cytoplasm. It carries out the reaction tRNA(Ala) + L-alanine + ATP = L-alanyl-tRNA(Ala) + AMP + diphosphate. Its function is as follows. Catalyzes the attachment of alanine to tRNA(Ala) in a two-step reaction: alanine is first activated by ATP to form Ala-AMP and then transferred to the acceptor end of tRNA(Ala). Also edits incorrectly charged Ser-tRNA(Ala) and Gly-tRNA(Ala) via its editing domain. The protein is Alanine--tRNA ligase of Pseudomonas fluorescens (strain Pf0-1).